Here is a 244-residue protein sequence, read N- to C-terminus: NAD-dependent protein deacetylase (244 aa).

The Deacetylase sirtuin-type domain maps to 1 to 244; that stretch reads MSATERQLQY…IGDTCRQLRA (244 aa). Positions 27, 31, 38, 39, 107, 109, 110, and 125 each coordinate NAD(+). Phe38 contacts nicotinamide. Nicotinamide-binding residues include Ile109 and Asp110. His125 functions as the Proton acceptor in the catalytic mechanism. Zn(2+) is bound by residues Cys133, Cys136, Cys153, and Cys156. Residues Ser192, Ser193, Asn217, and Ile235 each coordinate NAD(+).

Belongs to the sirtuin family. Class U subfamily. Requires Zn(2+) as cofactor.

Its subcellular location is the cytoplasm. It carries out the reaction N(6)-acetyl-L-lysyl-[protein] + NAD(+) + H2O = 2''-O-acetyl-ADP-D-ribose + nicotinamide + L-lysyl-[protein]. Its function is as follows. NAD-dependent protein deacetylase which modulates the activities of several enzymes which are inactive in their acetylated form. This Chromobacterium violaceum (strain ATCC 12472 / DSM 30191 / JCM 1249 / CCUG 213 / NBRC 12614 / NCIMB 9131 / NCTC 9757 / MK) protein is NAD-dependent protein deacetylase.